The primary structure comprises 951 residues: Valine--tRNA ligase (951 aa).

A 'HIGH' region motif is present at residues 42–52 (PNVTGSLHMGH). The 'KMSKS' region motif lies at 554-558 (KMSKS). Lys-557 is an ATP binding site. Positions 880 to 944 (AGLINKEDEL…AEAKAKLIEQ (65 aa)) form a coiled coil.

Belongs to the class-I aminoacyl-tRNA synthetase family. ValS type 1 subfamily. As to quaternary structure, monomer.

It localises to the cytoplasm. The catalysed reaction is tRNA(Val) + L-valine + ATP = L-valyl-tRNA(Val) + AMP + diphosphate. Catalyzes the attachment of valine to tRNA(Val). As ValRS can inadvertently accommodate and process structurally similar amino acids such as threonine, to avoid such errors, it has a 'posttransfer' editing activity that hydrolyzes mischarged Thr-tRNA(Val) in a tRNA-dependent manner. This chain is Valine--tRNA ligase, found in Shigella flexneri.